We begin with the raw amino-acid sequence, 97 residues long: Protein RESPONSE TO LOW SULFUR 3 (97 aa).

Residues 8–42 (VTVAAEEVEELRRRNGELEREMEEMKKEMVQLWRR) adopt a coiled-coil conformation.

This is Protein RESPONSE TO LOW SULFUR 3 from Arabidopsis thaliana (Mouse-ear cress).